Reading from the N-terminus, the 250-residue chain is FAS1 domain-containing protein AER383W (250 aa).

Residues 1 to 18 (MRLKTILLGFCAFHVARS) form the signal peptide. Positions 87–247 (GVTLDDRLQS…GIVLVIDSSL (161 aa)) constitute an FAS1 domain.

The protein resides in the vacuole. The sequence is that of FAS1 domain-containing protein AER383W from Eremothecium gossypii (strain ATCC 10895 / CBS 109.51 / FGSC 9923 / NRRL Y-1056) (Yeast).